The following is a 163-amino-acid chain: Probable ribosome biogenesis protein RLP24 (163 aa).

The protein belongs to the eukaryotic ribosomal protein eL24 family. In terms of assembly, associated with nucleolar and cytoplasmic pre-60S particles. At the end of biogenesis it dissociates from cytoplasmic pre-60S particles and is likely to be exchanged for its ribosomal homolog, RPL24.

It is found in the nucleus. The protein resides in the nucleolus. In terms of biological role, involved in the biogenesis of the 60S ribosomal subunit. Ensures the docking of GTPBP4/NOG1 to pre-60S particles. This is Probable ribosome biogenesis protein RLP24 (RSL24D1) from Pongo abelii (Sumatran orangutan).